We begin with the raw amino-acid sequence, 623 residues long: UvrABC system protein C (623 aa).

Positions 21 to 100 (AEPGVYLMRD…IKTHQPPYNV (80 aa)) constitute a GIY-YIG domain. Positions 210–245 (DELIRELQEKMIQAAEQENYEAAARYRDQIRGLEQL) constitute a UVR domain.

The protein belongs to the UvrC family. As to quaternary structure, interacts with UvrB in an incision complex.

Its subcellular location is the cytoplasm. Its function is as follows. The UvrABC repair system catalyzes the recognition and processing of DNA lesions. UvrC both incises the 5' and 3' sides of the lesion. The N-terminal half is responsible for the 3' incision and the C-terminal half is responsible for the 5' incision. This Synechococcus sp. (strain JA-2-3B'a(2-13)) (Cyanobacteria bacterium Yellowstone B-Prime) protein is UvrABC system protein C.